The following is a 228-amino-acid chain: MENQKILVAKYAIDRYIKSNMNLGIGTGTTVYHAIKYLSEKLKSGNLKNLKFYTTSSDTKYLLSKEQIPYESNFSKLNKNLDIAIDGADEILLEKKSLIKGMGGAHLMEKVIAYNSETLLIIADETKIVKKLGTKMPIPIEVAPNAVGFIMTRLEEMNLDITLRICNEKKGPIITDNNNYILDVKMHVENPEGTEKYFKLFPGILEIGIFNHKNTKIVYYQNKQIKEA.

Residues 27 to 30 (TGTT), 86 to 89 (DGAD), and 100 to 103 (KGMG) each bind substrate. E109 acts as the Proton acceptor in catalysis. Residue K127 coordinates substrate.

This sequence belongs to the ribose 5-phosphate isomerase family. Homodimer.

The catalysed reaction is aldehydo-D-ribose 5-phosphate = D-ribulose 5-phosphate. It functions in the pathway carbohydrate degradation; pentose phosphate pathway; D-ribose 5-phosphate from D-ribulose 5-phosphate (non-oxidative stage): step 1/1. In terms of biological role, catalyzes the reversible conversion of ribose-5-phosphate to ribulose 5-phosphate. In Borreliella afzelii (strain PKo) (Borrelia afzelii), this protein is Ribose-5-phosphate isomerase A.